Reading from the N-terminus, the 515-residue chain is MTKRVLISVSDKAGIVEFAQELKKLGWEIISTGGTKVALDNAGVETIAIDDVTGFPEMMDGRVKTLHPNIHGGLLARRDLDSHLEAANENQIELIDLVVVNLYPFKETILKPDVTYADAVENIDIGGPSMLRSAAKNHASVTVVVDPADYTVVLDELSANGETTYETRQRLAAKVFRHTAAYDALIAEYFTAQVGESKPEKLTLTYDLKQAMRYGENPQQDADFYQKALPTDYSIASAKQLNGKELSFNNIRDADAAIRIIRDFKDRPTVVALKHMNPCGIGQADDIETAWDYAYESDPVSIFGGIAVLNREVDAATAEKMHGVFLEIIIAPSYTDEALAILINKKKNLRILALPFNAQEASEVEAEYTGVVGGLLVQNQDVVKESPADWQVVTKRQPTETEATALEFAWKAIKYVKSNGIIVTNDHMTLGVGPGQTNRVASVRLAIDQAKDRLDGAVLASDAFFPFADNVEEIAKAGIKAIIQPGGSVRDQESIEAADKYGLTMVFTGVRHFRH.

Residues 1–145 enclose the MGS-like domain; it reads MTKRVLISVS…KNHASVTVVV (145 aa).

Belongs to the PurH family.

The enzyme catalyses (6R)-10-formyltetrahydrofolate + 5-amino-1-(5-phospho-beta-D-ribosyl)imidazole-4-carboxamide = 5-formamido-1-(5-phospho-D-ribosyl)imidazole-4-carboxamide + (6S)-5,6,7,8-tetrahydrofolate. It catalyses the reaction IMP + H2O = 5-formamido-1-(5-phospho-D-ribosyl)imidazole-4-carboxamide. The protein operates within purine metabolism; IMP biosynthesis via de novo pathway; 5-formamido-1-(5-phospho-D-ribosyl)imidazole-4-carboxamide from 5-amino-1-(5-phospho-D-ribosyl)imidazole-4-carboxamide (10-formyl THF route): step 1/1. It functions in the pathway purine metabolism; IMP biosynthesis via de novo pathway; IMP from 5-formamido-1-(5-phospho-D-ribosyl)imidazole-4-carboxamide: step 1/1. The chain is Bifunctional purine biosynthesis protein PurH from Streptococcus pneumoniae serotype 2 (strain D39 / NCTC 7466).